We begin with the raw amino-acid sequence, 405 residues long: GTPase Obg (405 aa).

The Obg domain occupies 1-159 (MRFIDEAVVT…KVLKFELKVV (159 aa)). The OBG-type G domain maps to 160–333 (ADVGLIGLPN…IKYHLMNEIE (174 aa)). Residues 166–173 (GLPNAGKS), 191–195 (FTTLV), 213–216 (DIPG), 283–286 (NKID), and 314–316 (ATL) each bind GTP. 2 residues coordinate Mg(2+): Ser-173 and Thr-193. Residues 371-382 (YRAARKAAREGT) are compositionally biased toward basic and acidic residues. A disordered region spans residues 371-405 (YRAARKAAREGTDLSDDDFDDSDDDDDGVEVVYAP). Residues 383–399 (DLSDDDFDDSDDDDDGV) are compositionally biased toward acidic residues.

This sequence belongs to the TRAFAC class OBG-HflX-like GTPase superfamily. OBG GTPase family. Monomer. It depends on Mg(2+) as a cofactor.

The protein resides in the cytoplasm. In terms of biological role, an essential GTPase which binds GTP, GDP and possibly (p)ppGpp with moderate affinity, with high nucleotide exchange rates and a fairly low GTP hydrolysis rate. Plays a role in control of the cell cycle, stress response, ribosome biogenesis and in those bacteria that undergo differentiation, in morphogenesis control. The protein is GTPase Obg of Psychrobacter cryohalolentis (strain ATCC BAA-1226 / DSM 17306 / VKM B-2378 / K5).